A 107-amino-acid chain; its full sequence is Phosphoribosyl-ATP pyrophosphatase 1 (107 aa).

The protein belongs to the PRA-PH family.

It is found in the cytoplasm. The catalysed reaction is 1-(5-phospho-beta-D-ribosyl)-ATP + H2O = 1-(5-phospho-beta-D-ribosyl)-5'-AMP + diphosphate + H(+). It functions in the pathway amino-acid biosynthesis; L-histidine biosynthesis; L-histidine from 5-phospho-alpha-D-ribose 1-diphosphate: step 2/9. The polypeptide is Phosphoribosyl-ATP pyrophosphatase 1 (hisE1) (Rhodopseudomonas palustris (strain ATCC BAA-98 / CGA009)).